A 517-amino-acid polypeptide reads, in one-letter code: Dopamine receptor 4 (517 aa).

The Extracellular segment spans residues 1-46 (MLAYGSDPNAEDLYITMTPSVSTENDTTVWATEEPAAIVWRHPLLA). N-linked (GlcNAc...) asparagine glycosylation occurs at N25. The chain crosses the membrane as a helical span at residues 47-67 (IALFSICLLTVAGNCLVVIAV). Over 68-77 (CTKKYLRNPT) the chain is Cytoplasmic. The helical transmembrane segment at 78-98 (GYLIISLAIADLIVGVIVMPM) threads the bilayer. The Extracellular portion of the chain corresponds to 99 to 108 (NSLFEIANHT). N-linked (GlcNAc...) asparagine glycosylation is present at N106. Residues 109 to 129 (WLFGLMMCDVFHAMDILASTA) traverse the membrane as a helical segment. Topologically, residues 130 to 159 (SIWNLCVISLDRYMAGQDPIGYRDKVSKRR) are cytoplasmic. A helical membrane pass occupies residues 160 to 180 (ILMAILSVWVLSAILSFPGII). Residues 181–209 (WWRTSSPHLYEDQSQCLFTDSKMYVSFSS) are Extracellular-facing. The helical transmembrane segment at 210 to 230 (LVSFYIPLFLILFAYGKVYII) threads the bilayer. Residues 231–409 (ATRHSKGMRM…YVHEQRAART (179 aa)) lie on the Cytoplasmic side of the membrane. Residues 309-339 (NDRGEHNNNNTVRQPLLRGTEGCHSDSISRS) form a disordered region. A helical transmembrane segment spans residues 410–430 (LSIVVGAFILCWTPFFVFTPL). Residues 431 to 442 (TAFCESCFSNKE) are Extracellular-facing. The helical transmembrane segment at 443–463 (TIFTFVTWAGHLNSMLNPLIY) threads the bilayer. At 464–517 (SRFSRDFRRAFKQILTCQRQQKVKTAFKTPLSLVFTQLISVTQMWEQPPNTSIE) the chain is on the cytoplasmic side.

This sequence belongs to the G-protein coupled receptor 1 family. In terms of tissue distribution, expressed in pharyngeal neurons I1 and I2, neurons ASG, AVL, CAN, PQR, vulva, intestine, rectal glands and rectal epithelial glands. Also expressed in neurons in ray 8 in males.

The protein resides in the cell membrane. In terms of biological role, receptor for dopamine. The activity of this receptor is mediated by G proteins which activate adenylyl cyclase. In terms of antagonist responses, would be classed with the D1-like dopamine receptor group. The chain is Dopamine receptor 4 (dop-4) from Caenorhabditis elegans.